The following is a 226-amino-acid chain: Ribonuclease 3 (226 aa).

In terms of domain architecture, RNase III spans 7–129 (LPRLCRTLGY…IIGAIYLDSD (123 aa)). A Mg(2+)-binding site is contributed by E42. Residue D46 is part of the active site. Positions 115 and 118 each coordinate Mg(2+). E118 is an active-site residue. A DRBM domain is found at 156-226 (DAKTLLQEYL…AAQVLELLKK (71 aa)).

The protein belongs to the ribonuclease III family. Homodimer. It depends on Mg(2+) as a cofactor.

Its subcellular location is the cytoplasm. The enzyme catalyses Endonucleolytic cleavage to 5'-phosphomonoester.. In terms of biological role, digests double-stranded RNA. Involved in the processing of primary rRNA transcript to yield the immediate precursors to the large and small rRNAs (23S and 16S). Processes some mRNAs, and tRNAs when they are encoded in the rRNA operon. Processes pre-crRNA and tracrRNA of type II CRISPR loci if present in the organism. The protein is Ribonuclease 3 of Shewanella sp. (strain ANA-3).